Reading from the N-terminus, the 331-residue chain is Glycerol-3-phosphate dehydrogenase [NAD(P)+] (331 aa).

3 residues coordinate NADPH: W13, R33, and K103. Positions 103, 131, and 133 each coordinate sn-glycerol 3-phosphate. A135 contributes to the NADPH binding site. Residues K187, D240, S250, R251, and N252 each contribute to the sn-glycerol 3-phosphate site. The active-site Proton acceptor is the K187. R251 lines the NADPH pocket. 2 residues coordinate NADPH: V275 and E277.

It belongs to the NAD-dependent glycerol-3-phosphate dehydrogenase family.

The protein resides in the cytoplasm. It carries out the reaction sn-glycerol 3-phosphate + NAD(+) = dihydroxyacetone phosphate + NADH + H(+). The enzyme catalyses sn-glycerol 3-phosphate + NADP(+) = dihydroxyacetone phosphate + NADPH + H(+). The protein operates within membrane lipid metabolism; glycerophospholipid metabolism. In terms of biological role, catalyzes the reduction of the glycolytic intermediate dihydroxyacetone phosphate (DHAP) to sn-glycerol 3-phosphate (G3P), the key precursor for phospholipid synthesis. In Novosphingobium aromaticivorans (strain ATCC 700278 / DSM 12444 / CCUG 56034 / CIP 105152 / NBRC 16084 / F199), this protein is Glycerol-3-phosphate dehydrogenase [NAD(P)+].